The following is a 124-amino-acid chain: Large ribosomal subunit protein bL12 (124 aa).

It belongs to the bacterial ribosomal protein bL12 family. As to quaternary structure, homodimer. Part of the ribosomal stalk of the 50S ribosomal subunit. Forms a multimeric L10(L12)X complex, where L10 forms an elongated spine to which 2 to 4 L12 dimers bind in a sequential fashion. Binds GTP-bound translation factors.

Functionally, forms part of the ribosomal stalk which helps the ribosome interact with GTP-bound translation factors. Is thus essential for accurate translation. The protein is Large ribosomal subunit protein bL12 of Paracoccus denitrificans (strain Pd 1222).